An 808-amino-acid polypeptide reads, in one-letter code: DNA replication licensing factor MCM3 (808 aa).

Alanine 2 is subject to N-acetylalanine. Phosphoserine occurs at positions 160 and 275. Lysine 293 carries the post-translational modification N6-acetyllysine. The MCM domain maps to 295 to 502 (IFDQLARSLA…QDREISDHVL (208 aa)). ADP-binding residues include glutamine 353, leucine 393, glutamate 394, alanine 395, and alanine 397. An Arginine finger motif is present at residues 477–480 (SRFD). Alanine 523 is a binding site for ATP. Serine 535 bears the Phosphoserine; by ATM mark. Lysine 547 is subject to N6-acetyllysine. Position 611 is a phosphoserine (serine 611). The segment at 662–739 (KKRKKRSEDE…ETKESQKVEL (78 aa)) is disordered. Arginine 664 serves as a coordination point for ATP. A phosphoserine mark is found at serine 668, serine 672, and serine 681. A compositionally biased stretch (basic and acidic residues) spans 679 to 688 (EKSQEDQEQK). Tyrosine 708 bears the Phosphotyrosine mark. Threonine 713 and threonine 722 each carry phosphothreonine. Over residues 727–739 (DSQETKESQKVEL) the composition is skewed to basic and acidic residues. A phosphoserine mark is found at serine 728 and serine 734.

The protein belongs to the MCM family. As to quaternary structure, component of the MCM2-7 complex. The complex forms a toroidal hexameric ring with the proposed subunit order MCM2-MCM6-MCM4-MCM7-MCM3-MCM5. Component of the CMG helicase complex, a hexameric ring of related MCM2-7 subunits stabilized by CDC45 and the tetrameric GINS complex. Associated with the replication-specific DNA polymerase alpha. Interacts with MCMBP. Interacts with ANKRD17. Interacts with MCM3AP isoform MCM3AP; this interaction leads to MCM3 acetylation. In terms of processing, acetylated by MCM3AP. Post-translationally, O-glycosylated (O-GlcNAcylated), in a cell cycle-dependent manner.

It localises to the nucleus. It is found in the chromosome. It catalyses the reaction ATP + H2O = ADP + phosphate + H(+). Functionally, acts as a component of the MCM2-7 complex (MCM complex) which is the replicative helicase essential for 'once per cell cycle' DNA replication initiation and elongation in eukaryotic cells. Core component of CDC45-MCM-GINS (CMG) helicase, the molecular machine that unwinds template DNA during replication, and around which the replisome is built. The active ATPase sites in the MCM2-7 ring are formed through the interaction surfaces of two neighboring subunits such that a critical structure of a conserved arginine finger motif is provided in trans relative to the ATP-binding site of the Walker A box of the adjacent subunit. The six ATPase active sites, however, are likely to contribute differentially to the complex helicase activity. Required for the entry in S phase and for cell division. The sequence is that of DNA replication licensing factor MCM3 (MCM3) from Bos taurus (Bovine).